A 296-amino-acid chain; its full sequence is 4-hydroxybenzoate octaprenyltransferase (296 aa).

Helical transmembrane passes span 29 to 49, 55 to 75, 102 to 122, 146 to 166, 169 to 189, 219 to 239, 241 to 261, and 275 to 295; these read IGIYLLLWPTLWSLWIAADGV, LLIFVLGVILMRAAGCVINDF, AWITFAVLVALSFGLVLLTNA, YYPQVVLGAAYSWGILMAFTA, GELPASAWLLFLANVLWTVAY, LIIGSLQGLTLLLLVLAGNRF, LGLCFYLGLAVAAACFVWEAW, and FLHNHWAGLAIFLGTVADYAL.

Belongs to the UbiA prenyltransferase family. Requires Mg(2+) as cofactor.

It localises to the cell inner membrane. It catalyses the reaction all-trans-octaprenyl diphosphate + 4-hydroxybenzoate = 4-hydroxy-3-(all-trans-octaprenyl)benzoate + diphosphate. It functions in the pathway cofactor biosynthesis; ubiquinone biosynthesis. Catalyzes the prenylation of para-hydroxybenzoate (PHB) with an all-trans polyprenyl group. Mediates the second step in the final reaction sequence of ubiquinone-8 (UQ-8) biosynthesis, which is the condensation of the polyisoprenoid side chain with PHB, generating the first membrane-bound Q intermediate 3-octaprenyl-4-hydroxybenzoate. In Pseudomonas aeruginosa (strain LESB58), this protein is 4-hydroxybenzoate octaprenyltransferase.